A 155-amino-acid polypeptide reads, in one-letter code: Deoxyuridine 5'-triphosphate nucleotidohydrolase (155 aa).

Substrate is bound by residues 74-76 (RSG), N87, and 91-93 (LID).

This sequence belongs to the dUTPase family. It depends on Mg(2+) as a cofactor.

It carries out the reaction dUTP + H2O = dUMP + diphosphate + H(+). The protein operates within pyrimidine metabolism; dUMP biosynthesis; dUMP from dCTP (dUTP route): step 2/2. This enzyme is involved in nucleotide metabolism: it produces dUMP, the immediate precursor of thymidine nucleotides and it decreases the intracellular concentration of dUTP so that uracil cannot be incorporated into DNA. The polypeptide is Deoxyuridine 5'-triphosphate nucleotidohydrolase (Xanthomonas oryzae pv. oryzae (strain PXO99A)).